The chain runs to 252 residues: Probable transcriptional regulatory protein Moth_1704 (252 aa).

It belongs to the TACO1 family.

The protein localises to the cytoplasm. The protein is Probable transcriptional regulatory protein Moth_1704 of Moorella thermoacetica (strain ATCC 39073 / JCM 9320).